The following is a 138-amino-acid chain: Ribosome-binding factor A (138 aa).

The protein belongs to the RbfA family. Monomer. Binds 30S ribosomal subunits, but not 50S ribosomal subunits or 70S ribosomes.

It localises to the cytoplasm. One of several proteins that assist in the late maturation steps of the functional core of the 30S ribosomal subunit. Associates with free 30S ribosomal subunits (but not with 30S subunits that are part of 70S ribosomes or polysomes). Required for efficient processing of 16S rRNA. May interact with the 5'-terminal helix region of 16S rRNA. This Sodalis glossinidius (strain morsitans) protein is Ribosome-binding factor A.